The primary structure comprises 339 residues: MFYKIAQKVMFQMDPERAHNLAIGSLKMTGNSPLNAFYAQNIAPAPVSFMGLTFPNPVGLAAGMDKDGESIDAFHAMGFGHVEVGTVTPRPQPGNDLPRLFRLKPAKAIINRMGFNNKGVDNLVKNLIAKKTDIMVGVNIGKNKDTPVEQGKDDYLICMDKVYPYAAYIAVNISSPNTPGLRSLQYGDLLDELLSALKTKQLELAEKHKKYVPIALKIAPDLTTEEIENIAQSLIKNKFDGAIATNTTLTRDGVSGLANANESGGLSGKPLTELSTKVIKQLATGLNGQIPIIGVGGINSAEDALAKFDAGATMVQIYSGFIYQGPKLIKEIVEAYRLK.

Residues 62–66 (AGMDK) and threonine 86 each bind FMN. Lysine 66 is a substrate binding site. Position 111 to 115 (111 to 115 (NRMGF)) interacts with substrate. Positions 139 and 172 each coordinate FMN. Asparagine 172 contacts substrate. Serine 175 functions as the Nucleophile in the catalytic mechanism. Asparagine 177 serves as a coordination point for substrate. The FMN site is built by lysine 217 and threonine 245. Residue 246 to 247 (NT) participates in substrate binding. Residues glycine 268, glycine 297, and 318–319 (YS) each bind FMN.

This sequence belongs to the dihydroorotate dehydrogenase family. Type 2 subfamily. Monomer. FMN serves as cofactor.

The protein resides in the cell membrane. The enzyme catalyses (S)-dihydroorotate + a quinone = orotate + a quinol. The protein operates within pyrimidine metabolism; UMP biosynthesis via de novo pathway; orotate from (S)-dihydroorotate (quinone route): step 1/1. Its function is as follows. Catalyzes the conversion of dihydroorotate to orotate with quinone as electron acceptor. This Shewanella sp. (strain ANA-3) protein is Dihydroorotate dehydrogenase (quinone).